Reading from the N-terminus, the 131-residue chain is Probable lactoylglutathione lyase (131 aa).

A VOC domain is found at 2–126; it reads FLLHTMIRVG…DGYKIELIQT (125 aa). His5 is a binding site for Ni(2+). Substrate is bound at residue Arg9. Glu56 lines the Ni(2+) pocket. Positions 60 and 74 each coordinate substrate. Ni(2+) contacts are provided by His74 and Glu122. Catalysis depends on Glu122, which acts as the Proton donor/acceptor.

This sequence belongs to the glyoxalase I family. Requires Ni(2+) as cofactor.

It carries out the reaction (R)-S-lactoylglutathione = methylglyoxal + glutathione. The protein operates within secondary metabolite metabolism; methylglyoxal degradation; (R)-lactate from methylglyoxal: step 1/2. Its function is as follows. Catalyzes the conversion of hemimercaptal, formed from methylglyoxal and glutathione, to S-lactoylglutathione. This is Probable lactoylglutathione lyase (gloA) from Synechocystis sp. (strain ATCC 27184 / PCC 6803 / Kazusa).